A 277-amino-acid chain; its full sequence is Undecaprenyl-diphosphatase (277 aa).

The next 8 helical transmembrane spans lie at 19–39 (FLPVSSTGHLFLFSSFFPFYG), 44–64 (FDDLFDIFIQSGAILSVLFLY), 89–109 (FHFLIQICIGAFPILIAGFIA), 122–142 (LLEILSGAWIFGGVLILVAEW), 154–174 (IGFKDSILIGIFQCMALIPGM), 195–215 (AEFSFFLAVPVLLAAGIYKLI), 224–244 (NTIPVLMFGFLVSFLLCTLVI), and 257–277 (SVFGVYRILLGVGVLVLTKLI).

The protein belongs to the UppP family.

It localises to the cell inner membrane. It catalyses the reaction di-trans,octa-cis-undecaprenyl diphosphate + H2O = di-trans,octa-cis-undecaprenyl phosphate + phosphate + H(+). Its function is as follows. Catalyzes the dephosphorylation of undecaprenyl diphosphate (UPP). Confers resistance to bacitracin. The polypeptide is Undecaprenyl-diphosphatase (Leptospira interrogans serogroup Icterohaemorrhagiae serovar copenhageni (strain Fiocruz L1-130)).